The primary structure comprises 379 residues: MQTQFIKTIEFERPGMESGSSCVAHAWARTPATPSPEEKIALKDRIRHLLKEREAVLVAHYYVDADLQDLAEETGGCVSDSLEMARFGRDHPAKTLVVAGVKFMGETAKILSPEKTILMPDLDATCSLDLGCPVDEFHAFCDAHPDRVVVVYANTSAAVKARADWMVTSSIGLKIVEHLHVQGKKILWAPDKHLGGYIQKQTGADMLLWQGSCLVHDEFKAVELELLKKEHPLAKVLVHPESPAAVVALADAVGSTSQLIHAAQTMDAPEFIVATDNGILHKMKMAAPGKIFIDAPTAGNSATCKSCAHCPWMAMNGLQNLLDVLESGRNEIHVDPEIGRKATVCIDRMLDFAAAQKANVRPSSDLAKEQKLFSGIGPA.

H60 and S81 together coordinate iminosuccinate. C126 contacts [4Fe-4S] cluster. Residues 152–154 (YAN) and S169 each bind iminosuccinate. Residue C213 coordinates [4Fe-4S] cluster. Iminosuccinate-binding positions include 239–241 (HPE) and T256. C310 provides a ligand contact to [4Fe-4S] cluster.

Belongs to the quinolinate synthase family. Type 1 subfamily. [4Fe-4S] cluster serves as cofactor.

The protein localises to the cytoplasm. It catalyses the reaction iminosuccinate + dihydroxyacetone phosphate = quinolinate + phosphate + 2 H2O + H(+). The protein operates within cofactor biosynthesis; NAD(+) biosynthesis; quinolinate from iminoaspartate: step 1/1. Functionally, catalyzes the condensation of iminoaspartate with dihydroxyacetone phosphate to form quinolinate. The polypeptide is Quinolinate synthase (Herminiimonas arsenicoxydans).